The chain runs to 406 residues: Putative gustatory receptor 59f (406 aa).

Residues Met1–Thr36 lie on the Cytoplasmic side of the membrane. The chain crosses the membrane as a helical span at residues Leu37–Gly57. Residues Cys58–Ser69 lie on the Extracellular side of the membrane. Residues Trp70–Thr90 form a helical membrane-spanning segment. Topologically, residues Thr91–Tyr99 are cytoplasmic. The chain crosses the membrane as a helical span at residues Leu100–Trp120. The Extracellular portion of the chain corresponds to Gln121–Arg154. A glycan (N-linked (GlcNAc...) asparagine) is linked at Asn147. A helical membrane pass occupies residues Leu155–His175. Over Lys176 to Tyr189 the chain is Cytoplasmic. A helical transmembrane segment spans residues Val190 to Ile210. The Extracellular segment spans residues Ala211–Tyr259. Asn254 is a glycosylation site (N-linked (GlcNAc...) asparagine). The helical transmembrane segment at Ser260 to Tyr280 threads the bilayer. Residues Gln281–Asn364 are Cytoplasmic-facing. A helical transmembrane segment spans residues Leu365–Leu385. Topologically, residues Gln386–Lys406 are extracellular. Asn401 carries an N-linked (GlcNAc...) asparagine glycan.

Belongs to the insect chemoreceptor superfamily. Gustatory receptor (GR) family. Gr10a subfamily. In terms of tissue distribution, expressed in the adult abdomen and wing. In larvae, is expressed in neurons of the terminal external chemosensory organ.

The protein resides in the cell membrane. Probable gustatory receptor which mediates acceptance or avoidance behavior, depending on its substrates. The chain is Putative gustatory receptor 59f (Gr59f) from Drosophila melanogaster (Fruit fly).